We begin with the raw amino-acid sequence, 364 residues long: Peptidyl-prolyl cis-trans isomerase D (364 aa).

The 164-residue stretch at 7–170 folds into the PPIase cyclophilin-type domain; it reads YFDITIGNKP…EDAVIAKCGE (164 aa). 3 TPR repeats span residues 208–241, 261–294, and 301–334; these read ATHL…LNEK, IPCY…DSKY, and TKAY…DPED.

Belongs to the cyclophilin-type PPIase family. PPIase D subfamily.

The protein resides in the cytoplasm. The catalysed reaction is [protein]-peptidylproline (omega=180) = [protein]-peptidylproline (omega=0). PPIases accelerate the folding of proteins. It catalyzes the cis-trans isomerization of proline imidic peptide bonds in oligopeptides. This chain is Peptidyl-prolyl cis-trans isomerase D (cyp12), found in Rhizopus delemar (strain RA 99-880 / ATCC MYA-4621 / FGSC 9543 / NRRL 43880) (Mucormycosis agent).